Here is a 689-residue protein sequence, read N- to C-terminus: Beta-adrenergic receptor kinase 1 (689 aa).

Positions 1–190 (MADLEAVLAD…ELNIHLTMND (190 aa)) are N-terminal. Positions 54-175 (TFEKIFSQKL…IESDKFTRFC (122 aa)) constitute an RGS domain. Residues 191 to 453 (FSVHRIIGRG…AQEVKESPFF (263 aa)) form the Protein kinase domain. Residues 197–205 (IGRGGFGEV) and K220 contribute to the ATP site. Residue D317 is the Proton acceptor of the active site. One can recognise an AGC-kinase C-terminal domain in the interval 454–521 (RSLDWQMVFL…TISERWQQEV (68 aa)). A PH domain is found at 558-652 (DCIVHGYMSK…WKKELRDAYR (95 aa)). Position 670 is a phosphoserine (S670).

It belongs to the protein kinase superfamily. AGC Ser/Thr protein kinase family. GPRK subfamily. As to quaternary structure, interacts with the heterodimer formed by GNB1 and GNG2. Interacts with GIT1. Interacts with, and phosphorylates chemokine-stimulated CCR5. Interacts with ARRB1. Interacts with LPAR1 and LPAR2. Interacts with RALA in response to LPAR1 activation. ADRBK1 and RALA mutually inhibit each other's binding to LPAR1. Interacts with ADRB2.

It is found in the cytoplasm. The protein resides in the cell membrane. It localises to the postsynapse. Its subcellular location is the presynapse. It catalyses the reaction [beta-adrenergic receptor] + ATP = [beta-adrenergic receptor]-phosphate + ADP + H(+). With respect to regulation, in contrast to other AGC family kinases, the catalytic activity is solely regulated by the binding of substrates and ligands, not by phosphorylation of the kinase domain. In terms of biological role, specifically phosphorylates the agonist-occupied form of the beta-adrenergic and closely related receptors, probably inducing a desensitization of them. Key regulator of LPAR1 signaling. Competes with RALA for binding to LPAR1 thus affecting the signaling properties of the receptor. Desensitizes LPAR1 and LPAR2 in a phosphorylation-independent manner. Positively regulates ciliary smoothened (SMO)-dependent Hedgehog (Hh) signaling pathway by facilitating the trafficking of SMO into the cilium and the stimulation of SMO activity. Inhibits relaxation of airway smooth muscle in response to blue light. This is Beta-adrenergic receptor kinase 1 from Mus musculus (Mouse).